Reading from the N-terminus, the 548-residue chain is Cleavage and polyadenylation specificity factor subunit 6 (548 aa).

The RRM domain occupies 81–161 (IALYIGNLTW…QKPIVTPCNK (81 aa)). The segment covering 169–180 (MQSRKTATQAGQ) has biased composition (polar residues). Disordered stretches follow at residues 169–401 (MQSR…MDVV) and 473–548 (LHGI…YRHR). Composition is skewed to pro residues over residues 221 to 279 (PAGP…PPVM), 294 to 362 (PPGP…PPPG), and 373 to 384 (GPPPSDPYGRPP). 2 stretches are compositionally biased toward basic and acidic residues: residues 385–400 (PYER…DMDV) and 490–500 (RSRERDHSRSR). Basic residues predominate over residues 501–511 (EKSRRHKSRSR). The segment covering 512–548 (DRHDDYYRERSRERERHRDRERDRDRERDREREYRHR) has biased composition (basic and acidic residues).

This sequence belongs to the RRM CPSF6/7 family. As to quaternary structure, component of the cleavage factor Im (CFIm) complex.

It localises to the nucleus. The protein resides in the nucleoplasm. Its subcellular location is the nucleus speckle. It is found in the cytoplasm. Component of the cleavage factor Im (CFIm) complex that functions as an activator of the pre-mRNA 3'-end cleavage and polyadenylation processing required for the maturation of pre-mRNA into functional mRNAs. CFIm contributes to the recruitment of multiprotein complexes on specific sequences on the pre-mRNA 3'-end, so called cleavage and polyadenylation signals (pA signals). Most pre-mRNAs contain multiple pA signals, resulting in alternative cleavage and polyadenylation (APA) producing mRNAs with variable 3'-end formation. The CFIm complex acts as a key regulator of cleavage and polyadenylation site choice during APA through its binding to 5'-UGUA-3' elements localized in the 3'-untranslated region (UTR) for a huge number of pre-mRNAs. Plays a role in mRNA export. The chain is Cleavage and polyadenylation specificity factor subunit 6 from Xenopus laevis (African clawed frog).